Reading from the N-terminus, the 186-residue chain is Imidazoleglycerol-phosphate dehydratase (186 aa).

It belongs to the imidazoleglycerol-phosphate dehydratase family.

The protein localises to the cytoplasm. It carries out the reaction D-erythro-1-(imidazol-4-yl)glycerol 3-phosphate = 3-(imidazol-4-yl)-2-oxopropyl phosphate + H2O. Its pathway is amino-acid biosynthesis; L-histidine biosynthesis; L-histidine from 5-phospho-alpha-D-ribose 1-diphosphate: step 6/9. The chain is Imidazoleglycerol-phosphate dehydratase from Pyrobaculum aerophilum (strain ATCC 51768 / DSM 7523 / JCM 9630 / CIP 104966 / NBRC 100827 / IM2).